Here is a 741-residue protein sequence, read N- to C-terminus: Eukaryotic peptide chain release factor GTP-binding subunit (741 aa).

Residues glutamine 5 to asparagine 135 are several sort of repeats. Low complexity predominate over residues glutamine 59 to glutamine 161. 2 disordered regions span residues glutamine 59–leucine 186 and isoleucine 199–alanine 264. Residues methionine 162–aspartate 311 are charged. Basic and acidic residues-rich tracts occupy residues aspartate 166–leucine 175 and lysine 202–valine 241. The 226-residue stretch at lysine 316 to arginine 541 folds into the tr-type G domain. Positions glycine 325 to serine 332 are G1. Glycine 325–serine 332 contacts GTP. Residues glycine 381–glutamate 385 are G2. Threonine 399 carries the phosphothreonine modification. Residues aspartate 402 to glycine 405 form a G3 region. GTP-binding positions include aspartate 402 to histidine 406 and asparagine 464 to aspartate 467. Residues asparagine 464 to aspartate 467 form a G4 region. A G5 region spans residues serine 505–tyrosine 507.

Belongs to the TRAFAC class translation factor GTPase superfamily. Classic translation factor GTPase family. ERF3 subfamily.

It localises to the cytoplasm. In terms of biological role, involved in translation termination. Stimulates the activity of ERF1. Binds guanine nucleotides. The chain is Eukaryotic peptide chain release factor GTP-binding subunit (SUP2) from Ogataea pini (Yeast).